The following is a 240-amino-acid chain: Seed lectin (240 aa).

The N-linked (GlcNAc...) asparagine glycan is linked to asparagine 111. 2 residues coordinate Mn(2+): glutamate 123 and aspartate 125. Residues aspartate 125, asparagine 129, and aspartate 132 each contribute to the Ca(2+) site. Mn(2+)-binding residues include aspartate 132 and histidine 137. Asparagine 183 carries N-linked (GlcNAc...) asparagine glycosylation.

It belongs to the leguminous lectin family. As to quaternary structure, homotetramer. In terms of processing, partially N-glycosylated at Asn-111 and Asn-183 with the heptasaccharide [(beta-xylosyl-1,2)(alpha-mannosyl-1,6)(alpha-mannosyl-1,3)]beta-manosyl-1,4-GlcNAC-beta-1,4-GlcNAc-beta-1,4 [alpha-fucosyl-1,3]GlcNAc. A small proportion of alpha chains are proteolytically cleaved at 114-115 into gamma and beta chains. This is probably dependent on the deglycosylation of Asn-111. In terms of tissue distribution, seed.

In terms of biological role, lectin that binds galactose. The protein is Seed lectin of Vatairea macrocarpa.